The primary structure comprises 804 residues: Probable copper-exporting P-type ATPase (804 aa).

Residues 1–101 (MVKDTYISSA…VEHLSRMKRK (101 aa)) lie on the Cytoplasmic side of the membrane. The HMA 1 domain maps to 16-82 (MERTVRVTGM…VIEDLGYGVV (67 aa)). Cu(+) is bound by residues Cys27 and Cys30. The helical transmembrane segment at 102–122 (LYVAAFAGVLLLFLAHFISLP) threads the bilayer. The Extracellular portion of the chain corresponds to 123–128 (YEDFVQ). The helical transmembrane segment at 129–149 (LLIALPAIFYSGSSIFKAAFS) threads the bilayer. Residues 150 to 159 (ALRRRTLNMD) lie on the Cytoplasmic side of the membrane. The chain crosses the membrane as a helical span at residues 160–180 (VMYSMGVGAAFLASVLSTAGV). The Extracellular portion of the chain corresponds to 181–186 (LPREYS). Residues 187–204 (FYETSVLLLAFLLLGRTL) form a helical membrane-spanning segment. Residues 205 to 339 (EARAKSRTGE…PIQRLADKVV (135 aa)) are Cytoplasmic-facing. Residues 340–360 (AYFIPTVLLVAISAFIYWYFI) traverse the membrane as a helical segment. At 361–364 (AHAP) the chain is on the extracellular side. Residues 365–385 (LLFAFTTLIAVLVVACPCAFG) form a helical membrane-spanning segment. Over 386–680 (LATPTALTVG…KIKQNIFWAL (295 aa)) the chain is Cytoplasmic. The active-site 4-aspartylphosphate intermediate is Asp424. Residues 457–462 (ERRSEH) and 490–501 (GEGVVADGILVG) contribute to the ATP site. Mg(2+) contacts are provided by Asp618 and Asp622. Residues 681-701 (IYNVILIPAAAGLLYPIFGVV) traverse the membrane as a helical segment. Over 702–704 (FRP) the chain is Extracellular. A helical membrane pass occupies residues 705–725 (EFAGLAMAMSSVSVVANSLLL). Topologically, residues 726 to 804 (RNYVPPIRRG…AAGYQAKLRS (79 aa)) are cytoplasmic. The HMA 2 domain maps to 740-801 (EKIVLELSGL…AVEAAGYQAK (62 aa)). Residues Cys751 and Cys754 each contribute to the Cu(+) site.

The protein belongs to the cation transport ATPase (P-type) (TC 3.A.3) family. Type IB subfamily. Interacts with CopZ probably in the CopZ Cu(+)-bound form.

Its subcellular location is the cell membrane. The enzyme catalyses Cu(+)(in) + ATP + H2O = Cu(+)(out) + ADP + phosphate + H(+). Activated by Cu(+) and Ag(+) and inhibited by vanadate. Activated by CopZ in its Cu(+)-bound form. Its function is as follows. Probably involved in copper and silver export. The chain is Probable copper-exporting P-type ATPase (copA) from Archaeoglobus fulgidus (strain ATCC 49558 / DSM 4304 / JCM 9628 / NBRC 100126 / VC-16).